Here is a 177-residue protein sequence, read N- to C-terminus: Glutathione peroxidase homolog (177 aa).

Cys-35 is an active-site residue.

The protein belongs to the glutathione peroxidase family.

Its function is as follows. Important in the cellular metabolism or defense processes particular to this pathogen. In Neisseria meningitidis serogroup A / serotype 4A (strain DSM 15465 / Z2491), this protein is Glutathione peroxidase homolog (gpxA).